The sequence spans 448 residues: MQVIASFCSKPNENEFVGRRQLLSSVCSKISQGDVVSHPPVSSVKVTQDWKSNLHELAVKSVPSTTRRILLTSLFMNLCFNPSRYLSALALGDPSVATVEDVSPTVFPAGPLFPTEGRIVQLFEKNTYSVVNIFDVTLRPQLKMTGVVEIPEGNGSGVVWDGQGYIVTNYHVIGNALSRNPSPGDVVGRVNILASDGVQKNFEGKLVGADRAKDLAVLKVDAPETLLKPIKVGQSNSLKVGQQCLAIGNPFGFDHTLTVGVISGLNRDIFSQTGVTIGGGIQTDAAINPGNSGGPLLDSKGNLIGINTAIFTQTGTSAGVGFAIPSSTVLKIVPQLIQFSKVLRAGINIELAPDPVANQLNVRNGALVLQVPGKSLAEKAGLHPTSRGFAGNIVLGDIIVAVDDKPVKNKAELMKILDEYSVGDKVTLKIKRGNEDLELKISLEEKSS.

The segment at E152–V333 is serine protease. Residues H171, D214, and S292 each act as charge relay system in the active site. Positions L336–G433 constitute a PDZ domain.

The protein belongs to the peptidase S1C family.

It localises to the plastid. It is found in the chloroplast thylakoid lumen. Its function is as follows. Probable serine protease. The sequence is that of Protease Do-like 8, chloroplastic (DEGP8) from Arabidopsis thaliana (Mouse-ear cress).